The sequence spans 354 residues: COP9 signalosome complex subunit 5 (354 aa).

The MPN domain maps to valine 56 to aspartate 193. The Zn(2+) site is built by histidine 139, histidine 141, and aspartate 152. Residues histidine 139–aspartate 152 carry the JAMM motif motif. Residues aspartate 193–serine 212 are disordered.

It belongs to the peptidase M67A family. CSN5 subfamily. In terms of assembly, component of the COP9 signalosome (CSN) complex.

It is found in the cytoplasm. Its subcellular location is the nucleus. Its function is as follows. Catalytic Component of the COP9 signalosome (CSN) complex that acts as an regulator of the ubiquitin (Ubl) conjugation pathway by mediating the deneddylation of the cullin subunit of SCF-type E3 ubiquitin-protein ligase complexes. This chain is COP9 signalosome complex subunit 5 (RRI1), found in Yarrowia lipolytica (strain CLIB 122 / E 150) (Yeast).